A 339-amino-acid chain; its full sequence is DNA-directed RNA polymerase subunit alpha (339 aa).

Residues 1–233 (MVREEITGST…DLFLPFIHTE (233 aa)) are alpha N-terminal domain (alpha-NTD). Residues 266–339 (GIPLNCIFID…IDLPKNKFSL (74 aa)) are alpha C-terminal domain (alpha-CTD).

This sequence belongs to the RNA polymerase alpha chain family. In terms of assembly, in plastids the minimal PEP RNA polymerase catalytic core is composed of four subunits: alpha, beta, beta', and beta''. When a (nuclear-encoded) sigma factor is associated with the core the holoenzyme is formed, which can initiate transcription.

It is found in the plastid. The protein resides in the chloroplast. It carries out the reaction RNA(n) + a ribonucleoside 5'-triphosphate = RNA(n+1) + diphosphate. In terms of biological role, DNA-dependent RNA polymerase catalyzes the transcription of DNA into RNA using the four ribonucleoside triphosphates as substrates. In Sorghum bicolor (Sorghum), this protein is DNA-directed RNA polymerase subunit alpha.